The sequence spans 109 residues: Large ribosomal subunit protein uL23 (109 aa).

This sequence belongs to the universal ribosomal protein uL23 family. As to quaternary structure, part of the 50S ribosomal subunit. Contacts protein L29, and trigger factor when it is bound to the ribosome.

In terms of biological role, one of the early assembly proteins it binds 23S rRNA. One of the proteins that surrounds the polypeptide exit tunnel on the outside of the ribosome. Forms the main docking site for trigger factor binding to the ribosome. The chain is Large ribosomal subunit protein uL23 from Aquifex pyrophilus.